Consider the following 425-residue polypeptide: Glutamyl-tRNA reductase (425 aa).

Residues 49–52, serine 107, 112–114, and glutamine 118 each bind substrate; these read TCNR and EPQ. The Nucleophile role is filled by cysteine 50. 187 to 192 is an NADP(+) binding site; sequence GAGETI.

This sequence belongs to the glutamyl-tRNA reductase family. As to quaternary structure, homodimer.

It carries out the reaction (S)-4-amino-5-oxopentanoate + tRNA(Glu) + NADP(+) = L-glutamyl-tRNA(Glu) + NADPH + H(+). It functions in the pathway porphyrin-containing compound metabolism; protoporphyrin-IX biosynthesis; 5-aminolevulinate from L-glutamyl-tRNA(Glu): step 1/2. In terms of biological role, catalyzes the NADPH-dependent reduction of glutamyl-tRNA(Glu) to glutamate 1-semialdehyde (GSA). This Pseudomonas syringae pv. syringae (strain B728a) protein is Glutamyl-tRNA reductase.